The sequence spans 164 residues: Bacterial ferritin (164 aa).

Residues 1–147 form the Ferritin-like diiron domain; it reads MKGKKSVISR…QQLGLIARMG (147 aa). Glu18, Glu51, His54, Glu94, Glu129, and His132 together coordinate Fe cation.

Belongs to the bacterioferritin family. As to quaternary structure, heterooligomer of 24 subunits, arranged as 12 dimers, that are packed together to form an approximately spherical molecule with a central cavity, in which large amounts of iron can be deposited.

The enzyme catalyses 4 Fe(2+) + O2 + 4 H(+) = 4 Fe(3+) + 2 H2O. It carries out the reaction Fe(2+)(in) = Fe(2+)(out). Its function is as follows. Iron-storage protein, whose ferroxidase center binds Fe(2+), oxidizes it using dioxygen to Fe(3+), and participates in the subsequent Fe(3+) oxide mineral core formation within the central cavity of the BFR protein shell. In Paramagnetospirillum magnetotacticum (Aquaspirillum magnetotacticum), this protein is Bacterial ferritin.